The following is a 468-amino-acid chain: Peroxisome proliferator-activated receptor alpha (468 aa).

Residues 99-173 (NIECRICGDK…VGMSHNAIRF (75 aa)) constitute a DNA-binding region (nuclear receptor). NR C4-type zinc fingers lie at residues 102–122 (CRIC…CEGC) and 139–161 (CDRS…FHKC). In terms of domain architecture, NR LBD spans 239 to 466 (FVIHDMETLC…HPLLQEIYRD (228 aa)). The segment at 304–433 (DQVTLLKYGV…PKLLQKMVDL (130 aa)) is required for heterodimerization with RXRA.

It belongs to the nuclear hormone receptor family. NR1 subfamily. Heterodimer; with RXRA. This heterodimerization is required for DNA binding and transactivation activity. Interacts with NCOA3 coactivator. Interacts with CITED2; the interaction stimulates its transcriptional activity. Also interacts with PPARBP in vitro. Interacts with AKAP13, LPIN1, PRDM16 and coactivator NCOA6. Interacts with ASXL1 and ASXL2. Interacts with PER2. Interacts with SIRT1; the interaction seems to be modulated by NAD(+) levels. Interacts with CRY1 and CRY2. In hepatocytes, interacts with PAQR3 and HUWE1; the interactions promote PPARA poylubiquitination and HUWE1-mediated degradation. Ubiquitinated by E3 ubiquitin-protein ligase HUWE1; leading to proteasomal degradation. In terms of processing, phosphorylated. As to expression, highly expressed in liver, kidney and heart. Very weakly expressed in brain and testis.

Its subcellular location is the nucleus. Functionally, ligand-activated transcription factor. Key regulator of lipid metabolism. Activated by the endogenous ligand 1-palmitoyl-2-oleoyl-sn-glycerol-3-phosphocholine (16:0/18:1-GPC). Activated by oleylethanolamide, a naturally occurring lipid that regulates satiety. Receptor for peroxisome proliferators such as hypolipidemic drugs and fatty acids. Regulates the peroxisomal beta-oxidation pathway of fatty acids. Functions as a transcription activator for the ACOX1 and P450 genes. Transactivation activity requires heterodimerization with RXRA and is antagonized by NR2C2. May be required for the propagation of clock information to metabolic pathways regulated by PER2. The sequence is that of Peroxisome proliferator-activated receptor alpha (Ppara) from Mus musculus (Mouse).